The sequence spans 271 residues: 5-deoxy-glucuronate isomerase (271 aa).

Belongs to the isomerase IolB family.

It carries out the reaction 5-deoxy-D-glucuronate = 5-dehydro-2-deoxy-D-gluconate. The protein operates within polyol metabolism; myo-inositol degradation into acetyl-CoA; acetyl-CoA from myo-inositol: step 4/7. Functionally, involved in the isomerization of 5-deoxy-glucuronate (5DG) to 5-dehydro-2-deoxy-D-gluconate (DKG or 2-deoxy-5-keto-D-gluconate). The protein is 5-deoxy-glucuronate isomerase of Bacillus velezensis (strain DSM 23117 / BGSC 10A6 / LMG 26770 / FZB42) (Bacillus amyloliquefaciens subsp. plantarum).